The chain runs to 500 residues: Putative DNA recombinase (500 aa).

Residues 1 to 144 form the Resolvase/invertase-type recombinase catalytic domain; that stretch reads MIAIYVRVST…SGRLQKMKKG (144 aa). Ser-9 (O-(5'-phospho-DNA)-serine intermediate) is an active-site residue. The recombinase DNA-binding region spans 152–288; it reads LYGYKFVKEK…QELLGQSKRK (137 aa). A coiled-coil region spans residues 372–448; the sequence is KEAEQSNHLS…IQSKMKVLDD (77 aa).

It in the N-terminal section; belongs to the site-specific recombinase resolvase family.

Functionally, putative site-specific recombinase having a very important role in sporulation. It probably plays a role in the recombination of SpoIIIC and SpoIVCB to form sigma K factor. This chain is Putative DNA recombinase (cisA), found in Bacillus subtilis (strain 168).